The following is a 150-amino-acid chain: Monothiol glutaredoxin-5, mitochondrial (150 aa).

The N-terminal 29 residues, 1–29 (MFLPKFNPIRSFSPILRAKTLLRYQNRMY), are a transit peptide targeting the mitochondrion. Residues 35 to 140 (RKAIEDAIES…DLLEEAQALV (106 aa)) form the Glutaredoxin domain. Lys52 is a glutathione binding site. Cys60 provides a ligand contact to [2Fe-2S] cluster. Glutathione contacts are provided by residues 92–96 (REGIK), Ile104, and 117–118 (CD).

It belongs to the glutaredoxin family. Monothiol subfamily. Homodimer. Interacts with SSQ1. Interacts with BOL1.

The protein resides in the mitochondrion matrix. Its function is as follows. Monothiol glutaredoxin involved in mitochondrial iron-sulfur (Fe/S) cluster transfer. Receives 2Fe/2S clusters from scaffold protein ISU1 and mediates their transfer to apoproteins, to the 4Fe/FS cluster biosynthesis machinery, or export from mitochondrion. The sequence is that of Monothiol glutaredoxin-5, mitochondrial from Saccharomyces cerevisiae (strain ATCC 204508 / S288c) (Baker's yeast).